Reading from the N-terminus, the 432-residue chain is Homogentisate 1,2-dioxygenase (432 aa).

Residue His286 is the Proton acceptor of the active site. Fe cation-binding residues include His329 and Glu335. Homogentisate is bound by residues Tyr344 and His365. Residue His365 coordinates Fe cation.

This sequence belongs to the homogentisate dioxygenase family. In terms of assembly, hexamer; dimer of trimers. Fe cation serves as cofactor.

The catalysed reaction is homogentisate + O2 = 4-maleylacetoacetate + H(+). The protein operates within amino-acid degradation; L-phenylalanine degradation; acetoacetate and fumarate from L-phenylalanine: step 4/6. In terms of biological role, involved in the catabolism of homogentisate (2,5-dihydroxyphenylacetate or 2,5-OH-PhAc), a central intermediate in the degradation of phenylalanine and tyrosine. Catalyzes the oxidative ring cleavage of the aromatic ring of homogentisate to yield maleylacetoacetate. The sequence is that of Homogentisate 1,2-dioxygenase from Bordetella petrii (strain ATCC BAA-461 / DSM 12804 / CCUG 43448).